The following is a 425-amino-acid chain: Phosphomethylpyrimidine synthase (425 aa).

Residues M94, Y123, H162, 184 to 186 (SRG), 225 to 228 (NGMR), and E264 contribute to the substrate site. A Zn(2+)-binding site is contributed by H268. Substrate is bound at residue Y291. H332 contributes to the Zn(2+) binding site. C407, C410, and C414 together coordinate [4Fe-4S] cluster.

This sequence belongs to the ThiC family. The cofactor is [4Fe-4S] cluster.

It catalyses the reaction 5-amino-1-(5-phospho-beta-D-ribosyl)imidazole + S-adenosyl-L-methionine = 4-amino-2-methyl-5-(phosphooxymethyl)pyrimidine + CO + 5'-deoxyadenosine + formate + L-methionine + 3 H(+). It participates in cofactor biosynthesis; thiamine diphosphate biosynthesis. Its function is as follows. Catalyzes the synthesis of the hydroxymethylpyrimidine phosphate (HMP-P) moiety of thiamine from aminoimidazole ribotide (AIR) in a radical S-adenosyl-L-methionine (SAM)-dependent reaction. The protein is Phosphomethylpyrimidine synthase of Methanoregula boonei (strain DSM 21154 / JCM 14090 / 6A8).